A 571-amino-acid polypeptide reads, in one-letter code: CDT1-like protein a, chloroplastic (571 aa).

Residues 1–79 (MSTPGSSRSI…GSRRRSEDPV (79 aa)) constitute a chloroplast transit peptide. 2 disordered regions span residues 1–110 (MSTP…EKEK) and 288–315 (TTSSLAKPTSSQINIAPTPTKPTSTPAK). The span at 22-38 (SPSSKSQTGNPNPSSVA) shows a compositional bias: polar residues. The segment covering 81-96 (SSAKSRLFFDSSSSSP) has biased composition (low complexity). Polar residues predominate over residues 288–302 (TTSSLAKPTSSQINI). The span at 303-315 (APTPTKPTSTPAK) shows a compositional bias: low complexity.

Belongs to the Cdt1 family. As to quaternary structure, binds to ARC6. Phosphorylated by cyclin D- and cyclin A-containing CDKA-1, and thus targeted to proteasome-mediated proteolysis. Expressed in proliferating (e.g. shoot and root apical meristems, organ primordia) and endoreplicating cells (e.g. guard cells and stomatal lineage, developing trichomes).

The protein resides in the plastid. It localises to the chloroplast. Member of the pre-replication complex. Component of the plastid division machinery. Promotes polyloidization and regulates endoreduplication. Involved in the coordination of cell and plastid division. The chain is CDT1-like protein a, chloroplastic (CDT1A) from Arabidopsis thaliana (Mouse-ear cress).